The sequence spans 442 residues: tRNA-2-methylthio-N(6)-dimethylallyladenosine synthase (442 aa).

The MTTase N-terminal domain maps to 3-120 (KKLYIETHGC…LPEMIDAARI (118 aa)). The [4Fe-4S] cluster site is built by cysteine 12, cysteine 49, cysteine 83, cysteine 157, cysteine 161, and cysteine 164. The 233-residue stretch at 143–375 (RIDGPSAYVS…QHRLNQQGFE (233 aa)) folds into the Radical SAM core domain. Residues 378–442 (RQMVGSVQRI…PHSLRGSLIQ (65 aa)) enclose the TRAM domain.

The protein belongs to the methylthiotransferase family. MiaB subfamily. As to quaternary structure, monomer. The cofactor is [4Fe-4S] cluster.

The protein localises to the cytoplasm. It carries out the reaction N(6)-dimethylallyladenosine(37) in tRNA + (sulfur carrier)-SH + AH2 + 2 S-adenosyl-L-methionine = 2-methylsulfanyl-N(6)-dimethylallyladenosine(37) in tRNA + (sulfur carrier)-H + 5'-deoxyadenosine + L-methionine + A + S-adenosyl-L-homocysteine + 2 H(+). Functionally, catalyzes the methylthiolation of N6-(dimethylallyl)adenosine (i(6)A), leading to the formation of 2-methylthio-N6-(dimethylallyl)adenosine (ms(2)i(6)A) at position 37 in tRNAs that read codons beginning with uridine. This Pseudomonas fluorescens (strain Pf0-1) protein is tRNA-2-methylthio-N(6)-dimethylallyladenosine synthase.